Reading from the N-terminus, the 723-residue chain is Probable alpha-fucosidase A (723 aa).

An N-terminal signal peptide occupies residues 1-15 (MRSLVLLGMSSLATA). N-linked (GlcNAc...) asparagine glycosylation is found at Asn-77, Asn-98, Asn-117, Asn-171, Asn-194, Asn-243, Asn-334, Asn-558, Asn-566, and Asn-595.

The protein belongs to the glycosyl hydrolase 95 family.

Its subcellular location is the secreted. It catalyses the reaction an alpha-L-fucoside + H2O = L-fucose + an alcohol. In terms of biological role, alpha-fucosidase involved in degradation of fucosylated xyloglucans. Hydrolyzes alpha-1,2-linked fucose. This Aspergillus oryzae (strain ATCC 42149 / RIB 40) (Yellow koji mold) protein is Probable alpha-fucosidase A (afcA).